Reading from the N-terminus, the 129-residue chain is Small ribosomal subunit protein uS11 (129 aa).

This sequence belongs to the universal ribosomal protein uS11 family. As to quaternary structure, part of the 30S ribosomal subunit. Interacts with proteins S7 and S18. Binds to IF-3.

Its function is as follows. Located on the platform of the 30S subunit, it bridges several disparate RNA helices of the 16S rRNA. Forms part of the Shine-Dalgarno cleft in the 70S ribosome. The polypeptide is Small ribosomal subunit protein uS11 (Halalkalibacterium halodurans (strain ATCC BAA-125 / DSM 18197 / FERM 7344 / JCM 9153 / C-125) (Bacillus halodurans)).